A 61-amino-acid chain; its full sequence is Conotoxin Vn5.3 (61 aa).

A signal peptide spans 1-19 (MRCLPVFVILLLLIASAPG). The propeptide occupies 20 to 50 (VDVQPKTKYYVPRASRRDFAKKTPKRLSKLR).

Belongs to the conotoxin T superfamily. Contains 2 disulfide bonds that can be either 'C1-C3, C2-C4' or 'C1-C4, C2-C3', since these disulfide connectivities have been observed for conotoxins with cysteine framework V (for examples, see AC P0DQQ7 and AC P81755). As to expression, expressed by the venom duct.

The protein resides in the secreted. This Conus ventricosus (Mediterranean cone) protein is Conotoxin Vn5.3.